Here is a 648-residue protein sequence, read N- to C-terminus: Threonine--tRNA ligase (648 aa).

Residues 1-63 (MAQISLTFPD…HADATIAIHT (63 aa)) form the TGS domain. The catalytic stretch occupies residues 247–544 (DHRKLGREMD…LIENSAGKLP (298 aa)). Residues Cys-344, His-395, and His-521 each coordinate Zn(2+).

Belongs to the class-II aminoacyl-tRNA synthetase family. Homodimer. Zn(2+) serves as cofactor.

The protein resides in the cytoplasm. The enzyme catalyses tRNA(Thr) + L-threonine + ATP = L-threonyl-tRNA(Thr) + AMP + diphosphate + H(+). In terms of biological role, catalyzes the attachment of threonine to tRNA(Thr) in a two-step reaction: L-threonine is first activated by ATP to form Thr-AMP and then transferred to the acceptor end of tRNA(Thr). Also edits incorrectly charged L-seryl-tRNA(Thr). This chain is Threonine--tRNA ligase, found in Roseobacter denitrificans (strain ATCC 33942 / OCh 114) (Erythrobacter sp. (strain OCh 114)).